We begin with the raw amino-acid sequence, 191 residues long: Elongation factor P (191 aa).

Belongs to the elongation factor P family.

The protein localises to the cytoplasm. The protein operates within protein biosynthesis; polypeptide chain elongation. Involved in peptide bond synthesis. Stimulates efficient translation and peptide-bond synthesis on native or reconstituted 70S ribosomes in vitro. Probably functions indirectly by altering the affinity of the ribosome for aminoacyl-tRNA, thus increasing their reactivity as acceptors for peptidyl transferase. This is Elongation factor P from Bartonella tribocorum (strain CIP 105476 / IBS 506).